The chain runs to 652 residues: Protein high chlorophyll fluorescent 107 (652 aa).

Disordered stretches follow at residues 1 to 21 (MHFF…NTSS) and 78 to 121 (VFSP…EGKK). The transit peptide at 1–68 (MHFFFVPNSS…TFSSKNTYLY (68 aa)) directs the protein to the chloroplast. Positions 105–121 (PLLENSDKESSEEEGKK) are enriched in basic and acidic residues. TPR repeat units lie at residues 168–201 (LDLS…WPED), 202–235 (GRPY…TQGE), 237–270 (SYIW…DKKH), 271–304 (VAAW…CGRN), 305–338 (EYIY…NSRS), 339–372 (CASW…SPKN), 374–406 (FAWH…NPRD), 407–440 (PVLL…DPRH), 441–474 (QPVW…DANT), 478–511 (SRCL…NSQS), 543–576 (TEVV…GQNN), and 598–631 (QQPE…DPLK). The segment at 585–610 (LRNMNRTKDSQSNQQPESSAGREDIE) is disordered.

May form homomultimers. Part of a multi-subunit complex in the range of 60-190 and 600-800 kDa in chloroplast membranes.

The protein localises to the plastid. It localises to the chloroplast. The protein resides in the chloroplast membrane. It is found in the chloroplast stroma. In terms of biological role, involved, directly or indirectly, in the processing of chloroplast encoded mRNAs. Exhibits sequence-specific RNA binding and RNA remodeling activities, probably leading to the activation of translation of the target gene cluster psbB-psbT-psbH-petB-petD. Blocks 5'-3' and 3'-5' exoribonucleases (e.g. polynucleotide phosphorylase (PNPase), RNase R) in vitro. Necessary for intercistronic RNA processing of the psbH 5' untranslated region or the stabilization of 5' processed psbH RNAs. Also required for the synthesis of psbB. The protein is Protein high chlorophyll fluorescent 107 of Arabidopsis thaliana (Mouse-ear cress).